Reading from the N-terminus, the 152-residue chain is Snaclec coagulation factor IX/factor X-binding protein subunit A (152 aa).

A signal peptide spans 1-23 (MGRFIFVSFGLLVVAASLSGTGA). Cystine bridges form between C25–C36, C53–C150, and C125–C142. The C-type lectin domain occupies 32 to 151 (YEGHCYKAFE…CGQRIPFVCE (120 aa)). 3 residues coordinate Ca(2+): S64, E66, and E70. A Ca(2+)-binding site is contributed by E151.

The protein belongs to the snaclec family. In terms of assembly, heterodimer of subunits A and B; disulfide-linked. As to expression, expressed by the venom gland.

It is found in the secreted. Functionally, anticoagulant protein which binds to the gamma-carboxyglutamic acid-domain regions of factors IX (F9) and factor X (F10) in the presence of calcium with a 1 to 1 stoichiometry. The polypeptide is Snaclec coagulation factor IX/factor X-binding protein subunit A (Trimeresurus stejnegeri (Chinese green tree viper)).